The chain runs to 180 residues: Large ribosomal subunit protein uL6 (180 aa).

The protein belongs to the universal ribosomal protein uL6 family. Part of the 50S ribosomal subunit.

This protein binds to the 23S rRNA, and is important in its secondary structure. It is located near the subunit interface in the base of the L7/L12 stalk, and near the tRNA binding site of the peptidyltransferase center. This chain is Large ribosomal subunit protein uL6, found in Bdellovibrio bacteriovorus (strain ATCC 15356 / DSM 50701 / NCIMB 9529 / HD100).